We begin with the raw amino-acid sequence, 306 residues long: tRNA dimethylallyltransferase (306 aa).

G13–T20 contributes to the ATP binding site. Residue T15 to T20 participates in substrate binding. Interaction with substrate tRNA stretches follow at residues D38–Q41 and Q161–R165.

It belongs to the IPP transferase family. Monomer. Mg(2+) is required as a cofactor.

The enzyme catalyses adenosine(37) in tRNA + dimethylallyl diphosphate = N(6)-dimethylallyladenosine(37) in tRNA + diphosphate. Functionally, catalyzes the transfer of a dimethylallyl group onto the adenine at position 37 in tRNAs that read codons beginning with uridine, leading to the formation of N6-(dimethylallyl)adenosine (i(6)A). This is tRNA dimethylallyltransferase from Maridesulfovibrio salexigens (strain ATCC 14822 / DSM 2638 / NCIMB 8403 / VKM B-1763) (Desulfovibrio salexigens).